Reading from the N-terminus, the 396-residue chain is Actin-related protein 6 (396 aa).

T2 is modified (N-acetylthreonine). K260 bears the N6-acetyllysine mark.

It belongs to the actin family. ARP6 subfamily. In terms of assembly, component of the chromatin-remodeling SRCAP complex composed of at least SRCAP, DMAP1, RUVBL1, RUVBL2, ACTL6A, YEATS4, ACTR6 and ZNHIT1. Interacts with CBX1, CBX3 and CBX5.

Its subcellular location is the cytoplasm. The protein resides in the cytoskeleton. It is found in the nucleus. The protein localises to the nucleolus. Its function is as follows. Required for formation and/or maintenance of proper nucleolar structure and function. Plays a dual role in the regulation of ribosomal DNA (rDNA) transcription. In the presence of high glucose, maintains active rDNA transcription through H2A.Z deposition and under glucose starvation, is required for the repression of rDNA transcription, and this function may be independent of H2A.Z. This is Actin-related protein 6 (ACTR6) from Homo sapiens (Human).